Here is a 146-residue protein sequence, read N- to C-terminus: Deoxyuridine 5'-triphosphate nucleotidohydrolase (146 aa).

Substrate contacts are provided by residues 65–67, N78, 82–84, and M92; these read RSG and LID.

It belongs to the dUTPase family. Mg(2+) is required as a cofactor.

The enzyme catalyses dUTP + H2O = dUMP + diphosphate + H(+). It participates in pyrimidine metabolism; dUMP biosynthesis; dUMP from dCTP (dUTP route): step 2/2. This enzyme is involved in nucleotide metabolism: it produces dUMP, the immediate precursor of thymidine nucleotides and it decreases the intracellular concentration of dUTP so that uracil cannot be incorporated into DNA. This is Deoxyuridine 5'-triphosphate nucleotidohydrolase from Thiobacillus denitrificans (strain ATCC 25259 / T1).